Consider the following 148-residue polypeptide: Glutamate mutase sigma subunit (148 aa).

One can recognise a B12-binding domain in the interval 3-140 (NPTIVIGVIG…KRDIERVMQS (138 aa)). Residues 13–17 (ADCHA), His-16, 61–63 (SSI), and 93–97 (NLVIG) each bind adenosylcob(III)alamin.

The protein belongs to the methylaspartate mutase GlmS subunit family. As to quaternary structure, heterotetramer composed of 2 epsilon subunits (GlmE) and 2 sigma subunits (GlmS). GlmE exists as a homodimer and GlmS as a monomer. Adenosylcob(III)alamin serves as cofactor.

The enzyme catalyses (2S,3S)-3-methyl-L-aspartate = L-glutamate. It functions in the pathway amino-acid degradation; L-glutamate degradation via mesaconate pathway; acetate and pyruvate from L-glutamate: step 1/4. Its function is as follows. Catalyzes the carbon skeleton rearrangement of L-glutamate to L-threo-3-methylaspartate ((2S,3S)-3-methylaspartate). The sequence is that of Glutamate mutase sigma subunit from Yersinia enterocolitica serotype O:8 / biotype 1B (strain NCTC 13174 / 8081).